The sequence spans 284 residues: Tropomyosin (284 aa).

The disordered stretch occupies residues M1–K38. Residues M1–Y284 adopt a coiled-coil conformation. The segment covering K12–K38 has biased composition (basic and acidic residues).

The protein belongs to the tropomyosin family. As to quaternary structure, homodimer.

Its function is as follows. Tropomyosin, in association with the troponin complex, plays a central role in the calcium dependent regulation of muscle contraction. This is Tropomyosin from Rhipicephalus microplus (Cattle tick).